We begin with the raw amino-acid sequence, 381 residues long: Putative F-box protein At3g17500 (381 aa).

The region spanning 1-45 (MMSNLPLDLVEEILSRVPATSLKRLRSTCKSWNNCYKDQRFTEKH) is the F-box domain.

The protein is Putative F-box protein At3g17500 of Arabidopsis thaliana (Mouse-ear cress).